Consider the following 300-residue polypeptide: ETS homologous factor (300 aa).

Residues 29 to 115 (STCNVSSGFF…SNLQHLKWNG (87 aa)) enclose the PNT domain. The segment at 183-202 (ESPDMKKEQDPPAKCHTKKH) is disordered. Basic and acidic residues predominate over residues 185-195 (PDMKKEQDPPA). Residues 207-289 (THLWEFIRDI…DGRRLVYKFG (83 aa)) constitute a DNA-binding region (ETS).

This sequence belongs to the ETS family. Expressed exclusively in tissues with a high content of epithelial cells. Highly expressed in salivary gland, mammary gland, prostate, and lung. Weakly expressed in kidney and colon. Not detected in heart, brain, placenta, liver, skeletal muscle, spleen, thymus, testis, ovary, small intestine or peripheral blood leukocytes.

It is found in the nucleus. Transcriptional activator that may play a role in regulating epithelial cell differentiation and proliferation. May act as a repressor for a specific subset of ETS/AP-1-responsive genes and as a modulator of the nuclear response to mitogen-activated protein kinase signaling cascades. Binds to DNA sequences containing the consensus nucleotide core sequence GGAA. Involved in regulation of TNFRSF10B/DR5 expression through Ets-binding sequences on the TNFRSF10B/DR5 promoter. May contribute to development and carcinogenesis by acting as a tumor suppressor gene or anti-oncogene. This is ETS homologous factor from Homo sapiens (Human).